A 245-amino-acid polypeptide reads, in one-letter code: Tetraspanin-6 (245 aa).

Residues 1 to 19 (MASPSRRLQTKPVITCFKS) lie on the Cytoplasmic side of the membrane. The chain crosses the membrane as a helical span at residues 20-40 (VLLIYTFIFWITGVILLAVGI). The Extracellular segment spans residues 41–59 (WGKVSLENYFSLLNEKATN). A helical membrane pass occupies residues 60-80 (VPFVLIATGTVIILLGTFGCF). The Cytoplasmic segment spans residues 81-93 (ATCRASAWMLKLY). A helical transmembrane segment spans residues 94 to 114 (AMFLTLIFLVELVAAIVGFVF). Residues 115 to 208 (RHEIKNSFKN…IKVMTIIESE (94 aa)) are Extracellular-facing. A glycan (N-linked (GlcNAc...) asparagine) is linked at Asn-134. The helical transmembrane segment at 209-229 (MGVVAGISFGVACFQLIGIFL) threads the bilayer. Over 230 to 245 (AYCLSRAITNNQYEIV) the chain is Cytoplasmic.

Belongs to the tetraspanin (TM4SF) family.

The protein resides in the membrane. The protein is Tetraspanin-6 (TSPAN6) of Pongo abelii (Sumatran orangutan).